Here is a 393-residue protein sequence, read N- to C-terminus: MNIPAPRKDLMIVNMGPHHPSMHGVLRLIVTLDGEDVIDCEPILGYLHRGMEKIAENRTIIQYLPYVTRWDYLATMFTEAITINGPELLGNIQVPKRASYIRAIMLELSRIASHLLWLGPFLADIGAQTPFFYIFRERELVYDLFEAATGMRMMHNFFRIGGVAADLPHGWIDKCLDFCDYFLIGVTEYQKLITRNPIFLERVEGVGVIGREEVINWGLSGPMLRASGIQWDLRKVDHYECYDEFDWEVQWQKEGDSLARYLVRIGEMTESIKIIQQALEGIPGGPYENLEIRYFDRERNPEWNDFDYRFISKKPSPTFELPKQELYVRVEAPKGELGIFLIGDQSGFPWRWKIRPPGFINLQILPQLVKRMKLADIMTILGSIDIIMGEVDR.

It belongs to the complex I 49 kDa subunit family. As to quaternary structure, NDH is composed of at least 16 different subunits, 5 of which are encoded in the nucleus.

It localises to the plastid. Its subcellular location is the chloroplast thylakoid membrane. The catalysed reaction is a plastoquinone + NADH + (n+1) H(+)(in) = a plastoquinol + NAD(+) + n H(+)(out). It catalyses the reaction a plastoquinone + NADPH + (n+1) H(+)(in) = a plastoquinol + NADP(+) + n H(+)(out). Functionally, NDH shuttles electrons from NAD(P)H:plastoquinone, via FMN and iron-sulfur (Fe-S) centers, to quinones in the photosynthetic chain and possibly in a chloroplast respiratory chain. The immediate electron acceptor for the enzyme in this species is believed to be plastoquinone. Couples the redox reaction to proton translocation, and thus conserves the redox energy in a proton gradient. This is NAD(P)H-quinone oxidoreductase subunit H, chloroplastic from Morus indica (Mulberry).